The sequence spans 312 residues: tRNA dimethylallyltransferase (312 aa).

17–24 (GPTASGKS) contributes to the ATP binding site. 19–24 (TASGKS) contributes to the substrate binding site.

Belongs to the IPP transferase family. In terms of assembly, monomer. Mg(2+) is required as a cofactor.

The enzyme catalyses adenosine(37) in tRNA + dimethylallyl diphosphate = N(6)-dimethylallyladenosine(37) in tRNA + diphosphate. Functionally, catalyzes the transfer of a dimethylallyl group onto the adenine at position 37 in tRNAs that read codons beginning with uridine, leading to the formation of N6-(dimethylallyl)adenosine (i(6)A). The sequence is that of tRNA dimethylallyltransferase from Zymomonas mobilis subsp. mobilis (strain ATCC 31821 / ZM4 / CP4).